The chain runs to 179 residues: Gamma-crystallin S (179 aa).

Ser-2 carries the N-acetylserine modification. The N-terminal arm stretch occupies residues 2–5 (SKTG). 2 consecutive Beta/gamma crystallin 'Greek key' domains span residues 6-44 (TKITFYEDKNFQGRRYDCDCDCSDFHTYLSRCNSIRVEG) and 45-87 (GTWA…RALH). The connecting peptide stretch occupies residues 88-93 (LSSGGQ). Beta/gamma crystallin 'Greek key' domains are found at residues 94 to 134 (YKIQ…KVLD) and 135 to 177 (GAWI…RRIV).

It belongs to the beta/gamma-crystallin family. In terms of assembly, monomer.

Its function is as follows. Crystallins are the dominant structural components of the vertebrate eye lens. The protein is Gamma-crystallin S (CRYGS) of Oryctolagus cuniculus (Rabbit).